Here is a 427-residue protein sequence, read N- to C-terminus: Riboflavin transporter rft-1 (427 aa).

Topologically, residues 1–2 (MK) are cytoplasmic. The helical transmembrane segment at 3 to 23 (TFLFTFCLVAIFGSSSWIGTN) threads the bilayer. At 24 to 42 (SVWMELSLLTAKLPEGWNL) the chain is on the extracellular side. Residues 43–63 (PSYLSAIVQIACLGPLIYSII) traverse the membrane as a helical segment. Over 64–73 (HKGIKMTIPT) the chain is Cytoplasmic. Residues 74-94 (VPLIFIFMVLACICQLGLCFF) traverse the membrane as a helical segment. The Extracellular segment spans residues 95–111 (WDDTGYIFGAIRSWPLY). Residues 112 to 132 (LLLFGLAIVDAISSVLFLPFM) traverse the membrane as a helical segment. Topologically, residues 133-139 (AQFHPSF) are cytoplasmic. The chain crosses the membrane as a helical span at residues 140 to 160 (LNAYFVGMGLSALIPSLLSLI). Residues 161 to 184 (QGTSNYWCDDNKTPHYYPPRFSVS) are Extracellular-facing. A helical membrane pass occupies residues 185–205 (MFFLINFFFTCAAVAAFLVLY). The Cytoplasmic portion of the chain corresponds to 206–261 (KIGAHKNSSQVEPEPKHSIQIIQGDSTTDVNEVNTESSFQETSSIPDSSSATGARL). Residues 262-282 (AFLLLTTALVNAQMNGIVTSV) form a helical membrane-spanning segment. The Extracellular portion of the chain corresponds to 283–297 (QSYATLVYSQNTYHY). The helical transmembrane segment at 298-318 (AVTLSNVISPLASYLQFFVKI) threads the bilayer. The Cytoplasmic portion of the chain corresponds to 319–322 (RSLP). The helical transmembrane segment at 323-343 (ILAFLTLCSSLTTAVIIYLAA) threads the bilayer. Topologically, residues 344-353 (LSPNWIFNSE) are extracellular. Residues 354–374 (TAGTIISIASSLIAAGLHSYL) form a helical membrane-spanning segment. The Cytoplasmic portion of the chain corresponds to 375 to 391 (RVMFAALLREGNQKESR). A helical membrane pass occupies residues 392 to 412 (LFWCGAFIQIGSFTGSAIMFP). At 413–427 (LVNVWKLFHSAPSCR) the chain is on the extracellular side.

It belongs to the riboflavin transporter family. In terms of tissue distribution, expressed in intestine.

Its subcellular location is the cell membrane. It carries out the reaction riboflavin(in) = riboflavin(out). Activity is strongly inhibited by riboflavin analogs, such as lumiflavin and lumichrome. Its function is as follows. Riboflavin transporter. Riboflavin transport is Na(+)-independent but pH-sensitive. This Caenorhabditis elegans protein is Riboflavin transporter rft-1.